Consider the following 512-residue polypeptide: Kynurenine 3-monooxygenase (512 aa).

This sequence belongs to the aromatic-ring hydroxylase family. KMO subfamily. The cofactor is FAD.

The protein localises to the mitochondrion outer membrane. The enzyme catalyses L-kynurenine + NADPH + O2 + H(+) = 3-hydroxy-L-kynurenine + NADP(+) + H2O. It participates in cofactor biosynthesis; NAD(+) biosynthesis; quinolinate from L-kynurenine: step 1/3. Catalyzes the hydroxylation of L-kynurenine (L-Kyn) to form 3-hydroxy-L-kynurenine (L-3OHKyn). Required for synthesis of quinolinic acid. The polypeptide is Kynurenine 3-monooxygenase (nic-3) (Neurospora crassa (strain ATCC 24698 / 74-OR23-1A / CBS 708.71 / DSM 1257 / FGSC 987)).